A 192-amino-acid chain; its full sequence is Adenylate kinase (192 aa).

10–15 (GAGKGT) contacts ATP. The tract at residues 30–56 (GTGGMLRALEPESGEQIHLRIDRGHFA) is NMP. Residues Thr-31, Arg-36, 82–85 (GFPR), and Gln-89 each bind AMP. Positions 123-133 (KRGETENRADD) are LID. Arg-124 is an ATP binding site. Residues Arg-130 and Arg-141 each contribute to the AMP site. Residue Asp-169 participates in ATP binding.

This sequence belongs to the adenylate kinase family. In terms of assembly, monomer.

The protein localises to the cytoplasm. The enzyme catalyses AMP + ATP = 2 ADP. The protein operates within purine metabolism; AMP biosynthesis via salvage pathway; AMP from ADP: step 1/1. Its function is as follows. Catalyzes the reversible transfer of the terminal phosphate group between ATP and AMP. Plays an important role in cellular energy homeostasis and in adenine nucleotide metabolism. This chain is Adenylate kinase, found in Rhodopirellula baltica (strain DSM 10527 / NCIMB 13988 / SH1).